The chain runs to 303 residues: uncharacterized protein (303 aa).

Phosphoserine is present on Ser63.

This sequence belongs to the HAD-like hydrolase superfamily.

The protein localises to the cytoplasm. Its subcellular location is the nucleus. This is an uncharacterized protein from Schizosaccharomyces pombe (strain 972 / ATCC 24843) (Fission yeast).